Reading from the N-terminus, the 468-residue chain is ERO1-like protein alpha (468 aa).

The signal sequence occupies residues 1-23; the sequence is MGRRWGFLIGFLVAVGLLGLGHG. 8 cysteine pairs are disulfide-bonded: cysteine 35-cysteine 48, cysteine 37-cysteine 46, cysteine 85-cysteine 391, cysteine 94-cysteine 99, cysteine 94-cysteine 131, cysteine 99-cysteine 104, cysteine 208-cysteine 241, and cysteine 394-cysteine 397. Phosphoserine occurs at positions 106, 143, and 145. Residues arginine 187, threonine 189, and tryptophan 200 each contribute to the FAD site. Positions 252 and 255 each coordinate FAD. Asparagine 280 carries an N-linked (GlcNAc...) asparagine glycan. FAD-binding residues include arginine 287 and arginine 300. Asparagine 384 carries N-linked (GlcNAc...) asparagine glycosylation.

This sequence belongs to the EROs family. In terms of assembly, predominantly monomer. May function both as a monomer and a homodimer. Interacts with PDILT. Interacts with ERP44; the interaction results in retention of ERO1A in the endoplasmic reticulum. FAD serves as cofactor. In terms of processing, the Cys-94/Cys-99 and Cys-394/Cys-397 disulfide bonds constitute the redox-active center. The Cys-94/Cys-99 disulfide bond may accept electron from P4HB and funnel them to the active site disulfide Cys-394/Cys-397. The regulatory Cys-99/Cys-104 disulfide bond stabilizes the other regulatory bond Cys-94/Cys-131. Post-translationally, phosphorylated on Ser-145 by FAM20C in the Golgi which increases its enzymatic activity. Phosphorylation is induced by lactation. It is also induced by hypoxia and reductive stress.

The protein resides in the endoplasmic reticulum membrane. Its subcellular location is the golgi apparatus lumen. It localises to the secreted. It is found in the cell projection. The protein localises to the dendrite. Enzyme activity is tightly regulated to prevent the accumulation of reactive oxygen species in the endoplasmic reticulum. Reversibly down-regulated by the formation of disulfide bonds between the active site Cys-94 and Cys-131, and between Cys-99 and Cys-104. Glutathione may be required to regulate its activity in the endoplasmic reticulum. Its function is as follows. Oxidoreductase involved in disulfide bond formation in the endoplasmic reticulum. Efficiently reoxidizes P4HB/PDI, the enzyme catalyzing protein disulfide formation, in order to allow P4HB to sustain additional rounds of disulfide formation. Following P4HB reoxidation, passes its electrons to molecular oxygen via FAD, leading to the production of reactive oxygen species (ROS) in the cell. Required for the proper folding of immunoglobulins. Plays an important role in ER stress-induced, CHOP-dependent apoptosis by activating the inositol 1,4,5-trisphosphate receptor IP3R1. The sequence is that of ERO1-like protein alpha from Bos taurus (Bovine).